Here is a 407-residue protein sequence, read N- to C-terminus: Proteasome-activating nucleotidase (407 aa).

A coiled-coil region spans residues 22 to 67 (KEKTQIAELESKVLRLELKNKDINRENVQIKKENEILKRELDKLRI). ATP-binding positions include 192-197 (GTGKTL) and histidine 331. Residues 405–407 (MYG) form a docks into pockets in the proteasome alpha-ring to cause gate opening region.

Belongs to the AAA ATPase family. As to quaternary structure, homohexamer. The hexameric complex has a two-ring architecture resembling a top hat that caps the 20S proteasome core at one or both ends. Upon ATP-binding, the C-terminus of PAN interacts with the alpha-rings of the proteasome core by binding to the intersubunit pockets.

The protein resides in the cytoplasm. Its function is as follows. ATPase which is responsible for recognizing, binding, unfolding and translocation of substrate proteins into the archaeal 20S proteasome core particle. Is essential for opening the gate of the 20S proteasome via an interaction with its C-terminus, thereby allowing substrate entry and access to the site of proteolysis. Thus, the C-termini of the proteasomal ATPase function like a 'key in a lock' to induce gate opening and therefore regulate proteolysis. Unfolding activity requires energy from ATP hydrolysis, whereas ATP binding alone promotes ATPase-20S proteasome association which triggers gate opening, and supports translocation of unfolded substrates. This chain is Proteasome-activating nucleotidase, found in Methanococcus maripaludis (strain DSM 14266 / JCM 13030 / NBRC 101832 / S2 / LL).